Reading from the N-terminus, the 312-residue chain is HTH-type transcriptional regulator PtxR (312 aa).

Positions 11 to 68 constitute an HTH lysR-type domain; it reads LNLNHLYAFVAVAEHNSFTAAAEALGLSKSLLSEQLRRLEADLGIQLLTRTTRRMTLT. Residues 28–47 constitute a DNA-binding region (H-T-H motif); sequence FTAAAEALGLSKSLLSEQLR.

The protein belongs to the LysR transcriptional regulatory family. Monomer in solution. May dimerize on binding to DNA. Interacts with PtxS in the absence of 2-ketogluconate. Binding of the 2-ketogluconate effector to PtxS causes PtxS/PtxR complex dissociation.

Negatively regulated by PtxS, which interacts with PtxR and prevents its activity. Functionally, plays an important role in the regulation of the production of the virulence factor exotoxin A (toxA), via positive regulation of the transcription of the toxA gene. Acts by binding directly to the toxA promoter region. Besides toxA, PtxR modulates the expression of genes that code for the QS-controlled virulence factors. It negatively regulates the expression of the rhamnolipid and pyocyanine genes, through the autoinducer synthase RhlI, and the PQS synthesis operon pqsABCDE, while it positively regulates the expression of lasB through the autoinducer synthase LasI. Also positively regulates the expression of the exotoxin A regulatory protein (toxR or regA). In terms of biological role, in addition, is involved in the positive regulation of glucose metabolism via the regulation of the expression of the kgu and gad operons. Acts by binding directly to the promoter region of the kgu and gad operons. In Pseudomonas aeruginosa (strain ATCC 15692 / DSM 22644 / CIP 104116 / JCM 14847 / LMG 12228 / 1C / PRS 101 / PAO1), this protein is HTH-type transcriptional regulator PtxR.